A 227-amino-acid chain; its full sequence is MNEETNNEFKKNLEKFKKMAKRGKETKMDKKPQIIVVGRSNVGKSTLVRLITKKDVRVGKKPGVTLKINKYDVGNFILVDLPGFGFMTGLEEKVQNKIKKEIVQYIEDNKDQIVGSIILIDVKAFPGIVERWDSKDEIPIDIEMFEFLEELELNPSIFINKMDKIKKNDQDKTLDKIVAIFGCPAPWRQWINDIITIGILKEGIGLNEVMVKINKNVNEYNRVKNKK.

Residues 30 to 219 (KKPQIIVVGR…MVKINKNVNE (190 aa)) form the EngB-type G domain. Residues 38–45 (GRSNVGKS), 63–67 (GVTLK), 80–83 (DLPG), 160–163 (NKMD), and 197–199 (IGI) each bind GTP. The Mg(2+) site is built by Ser45 and Thr65.

The protein belongs to the TRAFAC class TrmE-Era-EngA-EngB-Septin-like GTPase superfamily. EngB GTPase family. Mg(2+) serves as cofactor.

In terms of biological role, necessary for normal cell division and for the maintenance of normal septation. The chain is Probable GTP-binding protein EngB from Methanococcus aeolicus (strain ATCC BAA-1280 / DSM 17508 / OCM 812 / Nankai-3).